A 364-amino-acid chain; its full sequence is 3-isopropylmalate dehydrogenase (364 aa).

Position 78 to 91 (78 to 91) interacts with NAD(+); that stretch reads GKKWDYLSIDKRPE. The substrate site is built by arginine 99, arginine 109, arginine 138, and aspartate 227. 3 residues coordinate Mg(2+): aspartate 227, aspartate 251, and aspartate 255. 285 to 297 serves as a coordination point for NAD(+); the sequence is GSAPDIAGKNIAN.

The protein belongs to the isocitrate and isopropylmalate dehydrogenases family. LeuB type 1 subfamily. As to quaternary structure, homodimer. Mg(2+) is required as a cofactor. It depends on Mn(2+) as a cofactor.

Its subcellular location is the cytoplasm. It carries out the reaction (2R,3S)-3-isopropylmalate + NAD(+) = 4-methyl-2-oxopentanoate + CO2 + NADH. It participates in amino-acid biosynthesis; L-leucine biosynthesis; L-leucine from 3-methyl-2-oxobutanoate: step 3/4. Catalyzes the oxidation of 3-carboxy-2-hydroxy-4-methylpentanoate (3-isopropylmalate) to 3-carboxy-4-methyl-2-oxopentanoate. The product decarboxylates to 4-methyl-2 oxopentanoate. This is 3-isopropylmalate dehydrogenase from Buchnera aphidicola subsp. Uroleucon erigeronensis.